Consider the following 138-residue polypeptide: Small ribosomal subunit protein uS11 (138 aa).

The segment covering 1-12 (MPPAKKAAAAPK) has biased composition (low complexity). Residues 1–27 (MPPAKKAAAAPKKGQKTRRREKKNVPH) are disordered. Positions 13 to 22 (KGQKTRRREK) are enriched in basic residues.

Belongs to the universal ribosomal protein uS11 family. As to quaternary structure, part of the 30S ribosomal subunit. Interacts with proteins S7 and S18. Binds to IF-3.

Located on the platform of the 30S subunit, it bridges several disparate RNA helices of the 16S rRNA. Forms part of the Shine-Dalgarno cleft in the 70S ribosome. This is Small ribosomal subunit protein uS11 from Mycolicibacterium paratuberculosis (strain ATCC BAA-968 / K-10) (Mycobacterium paratuberculosis).